Here is a 327-residue protein sequence, read N- to C-terminus: tRNA dimethylallyltransferase (327 aa).

14-21 (GPTASGKT) serves as a coordination point for ATP. 16 to 21 (TASGKT) is a substrate binding site. Interaction with substrate tRNA stretches follow at residues 39–42 (DSAL) and 163–167 (QRIQR).

It belongs to the IPP transferase family. Monomer. The cofactor is Mg(2+).

It carries out the reaction adenosine(37) in tRNA + dimethylallyl diphosphate = N(6)-dimethylallyladenosine(37) in tRNA + diphosphate. In terms of biological role, catalyzes the transfer of a dimethylallyl group onto the adenine at position 37 in tRNAs that read codons beginning with uridine, leading to the formation of N6-(dimethylallyl)adenosine (i(6)A). The polypeptide is tRNA dimethylallyltransferase (Xanthomonas euvesicatoria pv. vesicatoria (strain 85-10) (Xanthomonas campestris pv. vesicatoria)).